Here is a 125-residue protein sequence, read N- to C-terminus: Holo-[acyl-carrier-protein] synthase (125 aa).

Mg(2+) is bound by residues D6 and E55.

The protein belongs to the P-Pant transferase superfamily. AcpS family. The cofactor is Mg(2+).

Its subcellular location is the cytoplasm. The enzyme catalyses apo-[ACP] + CoA = holo-[ACP] + adenosine 3',5'-bisphosphate + H(+). Transfers the 4'-phosphopantetheine moiety from coenzyme A to a Ser of acyl-carrier-protein. This is Holo-[acyl-carrier-protein] synthase from Chlorobium phaeovibrioides (strain DSM 265 / 1930) (Prosthecochloris vibrioformis (strain DSM 265)).